A 685-amino-acid polypeptide reads, in one-letter code: Small ribosomal subunit protein mS39 (685 aa).

The N-terminal 10 residues, 1-10, are a transit peptide targeting the mitochondrion; it reads MAAAAVAARR. Residue lysine 127 is modified to N6-acetyllysine. PPR repeat units follow at residues 150-184, 185-220, 254-288, 289-329, 330-366, 367-407, 412-446, 454-488, 489-523, and 572-606; these read IEDV…GTTV, SLET…ENLE, NARS…RLSA, DVYT…KVKP, NLQT…GIEP, SLAT…TFSP, DGRF…DNRK, RKVY…VFLP, HYQI…SHTF, and PANP…KKIP. Positions 663–685 are disordered; sequence LGNLTELNSSDGESSSDSDSDDK. Residues 676-685 are compositionally biased toward acidic residues; sequence SSSDSDSDDK.

It belongs to the mitochondrion-specific ribosomal protein mS39 family. In terms of assembly, component of the mitochondrial ribosome small subunit (28S) which comprises a 12S rRNA and about 30 distinct proteins. Associated with the 12S mitochondrial rRNA (12S mt-rRNA).

It localises to the mitochondrion. Mitochondrial RNA-binding protein that has a role in mitochondrial translation. This chain is Small ribosomal subunit protein mS39 (Ptcd3), found in Mus musculus (Mouse).